The sequence spans 210 residues: MSEKIGILGQKLGMTQVFGGNGFAVPVTVVQAGPCPIVQIKTVEKEGYNALQIAFGEGKKKHVSKSMQGHFSKAGLSLYRKIQEVRLKGSLTSYEVGQVLTVGLFSVGDKVKITGKSIGKGFQGAMRRWNFAGSKDSHGCEKVHRAAGSIGNNTFPGHVFKGKKMAGHWGTEKVTVQNLVVVDIRPEDNIILIHGSVPGPKNSFLFISMQ.

This sequence belongs to the universal ribosomal protein uL3 family. As to quaternary structure, part of the 50S ribosomal subunit. Forms a cluster with proteins L14 and L19.

Functionally, one of the primary rRNA binding proteins, it binds directly near the 3'-end of the 23S rRNA, where it nucleates assembly of the 50S subunit. In Lawsonia intracellularis (strain PHE/MN1-00), this protein is Large ribosomal subunit protein uL3.